The sequence spans 442 residues: DDB1- and CUL4-associated factor 12-B (442 aa).

A compositionally biased stretch (basic residues) spans 1–13 (MTRRPVSRKRRAT). The segment at 1-31 (MTRRPVSRKRRATHGTGPGEQSDWDHSAHKR) is disordered. WD repeat units follow at residues 132–173 (SHQS…PVCV), 177–215 (GHND…VNKR), 245–284 (PVNC…SKLL), and 333–370 (EQGS…FLED).

The protein belongs to the WD repeat DCAF12 family. In terms of assembly, component of the DCX(DCAF12) E3 ubiquitin ligase complex, at least composed of cul4 (cul4a or cul4b), ddb1, dcaf12 and rbx1.

The protein localises to the cytoplasm. Its subcellular location is the cytoskeleton. The protein resides in the microtubule organizing center. It localises to the centrosome. It is found in the nucleus. It functions in the pathway protein modification; protein ubiquitination. Its function is as follows. Substrate-recognition component of a DCX (DDB1-CUL4-X-box) E3 ubiquitin-protein ligase complex of the DesCEND (destruction via C-end degrons) pathway, which recognizes a C-degron located at the extreme C terminus of target proteins, leading to their ubiquitination and degradation. The C-degron recognized by the DesCEND pathway is usually a motif of less than ten residues and can be present in full-length proteins, truncated proteins or proteolytically cleaved forms. The DCX(DCAF12) complex specifically recognizes proteins with a diglutamate (Glu-Glu) at the C-terminus leading to their ubiquitination and degradation. Also directly recognizes the C-terminal glutamate-leucine (Glu-Leu) degron as an alternative degron in proteins leading to their ubiquitination and degradation. The polypeptide is DDB1- and CUL4-associated factor 12-B (dcaf12-b) (Xenopus laevis (African clawed frog)).